Here is a 254-residue protein sequence, read N- to C-terminus: Winged helix repair factor 1 (254 aa).

Positions 4-21 match the Bipartite nuclear localization signal motif; sequence KRHHLIPETFGVKRRRKR. Winged helix domain regions lie at residues 32-104, 120-179, and 180-254; these read EPGS…GIIF, PYAG…LAVP, and GAGR…LPET.

It belongs to the STK19 family. In terms of assembly, monomer in solution. Homodimer; when bound to DNA. Component of a transcription-coupled nucleotide excision repair (TC-NER) complex composed of STK19, ERCC6, ERCC8, DDA1, DDB1, ELOF1 and UVSSA which assembles and interacts with the multiprotein RNA polymerase II complex when it stalls at DNA lesions. In terms of tissue distribution, monocytes, hepatocytes, epithelial cells, T- and B-lymphocytes.

It localises to the nucleus. The protein localises to the cytoplasm. Its function is as follows. DNA-binding protein which is required for efficient transcription-coupled nucleotide excision repair (TC-NER). Acts as part of a TC-NER complex which assembles and interacts with RNA polymerase II (RNAPII) when it stalls at DNA lesions. TC-NER complex subunit UVSSA binds to the GTF2H1/p62 subunit of the TFIIH transcription factor complex, tethering TFIIH to the TC-NER complex. WHR1/STK19 then interacts with the XPD helicase subunit of TFIIH which guides TFIIH to DNA downstream of the stalled RNAPII, ensuring DNA repair. Directly interacts with RNAPII and also binds to downstream DNA. Promotes the timely removal of DNA damage-stalled RNAPII, allowing downstream NER factors to access DNA lesions. Required for monoubiquitination of UVSSA. Regulates repositioning and stabilization of UVSSA within the TC-NER complex. Stimulates ubiquitination of RNAPII complex member RBP1. Also binds to RNA and regulates the expression levels of many mRNAs. In Homo sapiens (Human), this protein is Winged helix repair factor 1.